The chain runs to 80 residues: MSLLVPVRTHQRHHPVVVELFVWEGTNDPTTEWPPLTRRNIHRLWQYARTLGGDDNVATAQRKLWRKANWLAFLEHVQRT.

This is Protein Vpy (vpy) from Bos taurus (Bovine).